Reading from the N-terminus, the 910-residue chain is Seizure 6-like protein 2 (910 aa).

A signal peptide spans 1 to 27; that stretch reads MGTPRAQHPPPPQLLFLILLSCPWIQG. The Extracellular portion of the chain corresponds to 28-844; sequence LPLKEEEILP…DPSRQLEGGN (817 aa). The interval 41–48 is O-glycosylated at one site; that stretch reads SETPTVAS. The tract at residues 65 to 152 is disordered; it reads EMGYLPGSDR…PLGPEGGEEE (88 aa). The segment covering 123-145 has biased composition (pro residues); that stretch reads LTPPPGTTAPPPPSPASPGPPLG. The cysteines at positions 173 and 202 are disulfide-linked. Residues 173-286 enclose the CUB 1 domain; sequence CNNNISEGEG…GGFRIHYQAY (114 aa). Asn176, Asn222, and Asn247 each carry an N-linked (GlcNAc...) asparagine glycan. A Sushi 1 domain is found at 288–347; sequence LSCGFPPRPAHGDVSVTDLHPGGTATFHCDSGYQLQGEETLICLNGTRPSWNGETPSCMA. 6 disulfide bridges follow: Cys290-Cys330, Cys316-Cys345, Cys349-Cys376, Cys464-Cys508, Cys491-Cys523, and Cys527-Cys553. 5 N-linked (GlcNAc...) asparagine glycosylation sites follow: Asn332, Asn355, Asn373, Asn473, and Asn517. Residues 349 to 459 enclose the CUB 2 domain; it reads CGGTIHNATL…LLLSLRFEAF (111 aa). The Sushi 2 domain maps to 462 to 525; that stretch reads DRCFAPFLAH…WNDTEPACKA (64 aa). In terms of domain architecture, CUB 3 spans 527–638; it reads CGGELSEPAG…QGFVLHFKEV (112 aa). A glycan (N-linked (GlcNAc...) asparagine) is linked at Asn641. 3 Sushi domains span residues 642 to 701, 703 to 766, and 769 to 830; these read DTCP…ACQK, MTCA…KCAL, and EPCL…LCKV. 6 disulfides stabilise this stretch: Cys644-Cys686, Cys672-Cys699, Cys705-Cys747, Cys733-Cys764, Cys771-Cys813, and Cys799-Cys828. Residues 845–865 traverse the membrane as a helical segment; it reads LALAILLPLGLVIVLGSGVYI. The Cytoplasmic portion of the chain corresponds to 866–910; sequence YYTKLQGKSLFGFSGSHSYSPITVESDFSNPLYEAGDTREYEVSI.

The protein belongs to the SEZ6 family. Post-translationally, O-glycosylated with core 1 or possibly core 8 glycans.

It is found in the cell membrane. The protein resides in the endoplasmic reticulum membrane. Its function is as follows. May contribute to specialized endoplasmic reticulum functions in neurons. The chain is Seizure 6-like protein 2 (SEZ6L2) from Homo sapiens (Human).